Consider the following 433-residue polypeptide: uncharacterized protein (433 aa).

Residues 258–304 (KNIKSKLLLELRQLKNNITNLQNKITKTMDNVKKIIEEIEQSKNKVT) are a coiled coil.

This sequence belongs to the mimivirus R160 family.

It is found in the virion. This is an uncharacterized protein from Acanthamoeba polyphaga mimivirus (APMV).